The primary structure comprises 286 residues: Bifunctional protein FolD (286 aa).

Residues G165–S167 and S190 each bind NADP(+).

It belongs to the tetrahydrofolate dehydrogenase/cyclohydrolase family. In terms of assembly, homodimer.

The enzyme catalyses (6R)-5,10-methylene-5,6,7,8-tetrahydrofolate + NADP(+) = (6R)-5,10-methenyltetrahydrofolate + NADPH. It carries out the reaction (6R)-5,10-methenyltetrahydrofolate + H2O = (6R)-10-formyltetrahydrofolate + H(+). It functions in the pathway one-carbon metabolism; tetrahydrofolate interconversion. Its function is as follows. Catalyzes the oxidation of 5,10-methylenetetrahydrofolate to 5,10-methenyltetrahydrofolate and then the hydrolysis of 5,10-methenyltetrahydrofolate to 10-formyltetrahydrofolate. The chain is Bifunctional protein FolD from Burkholderia cenocepacia (strain ATCC BAA-245 / DSM 16553 / LMG 16656 / NCTC 13227 / J2315 / CF5610) (Burkholderia cepacia (strain J2315)).